The following is a 502-amino-acid chain: 2,3-bisphosphoglycerate-independent phosphoglycerate mutase (502 aa).

Residues Asp-13 and Ser-63 each coordinate Mn(2+). The Phosphoserine intermediate role is filled by Ser-63. Residues His-117, 146-147 (RD), Arg-177, Arg-183, 251-254 (RSDR), and Lys-324 contribute to the substrate site. Asp-389, His-393, Asp-430, His-431, and His-448 together coordinate Mn(2+).

The protein belongs to the BPG-independent phosphoglycerate mutase family. Monomer. It depends on Mn(2+) as a cofactor.

The enzyme catalyses (2R)-2-phosphoglycerate = (2R)-3-phosphoglycerate. The protein operates within carbohydrate degradation; glycolysis; pyruvate from D-glyceraldehyde 3-phosphate: step 3/5. Catalyzes the interconversion of 2-phosphoglycerate and 3-phosphoglycerate. In Ureaplasma urealyticum serovar 10 (strain ATCC 33699 / Western), this protein is 2,3-bisphosphoglycerate-independent phosphoglycerate mutase.